We begin with the raw amino-acid sequence, 321 residues long: Transaldolase (321 aa).

Lys132 acts as the Schiff-base intermediate with substrate in catalysis.

It belongs to the transaldolase family. Type 1 subfamily. In terms of assembly, homodimer.

It is found in the cytoplasm. It catalyses the reaction D-sedoheptulose 7-phosphate + D-glyceraldehyde 3-phosphate = D-erythrose 4-phosphate + beta-D-fructose 6-phosphate. Its pathway is carbohydrate degradation; pentose phosphate pathway; D-glyceraldehyde 3-phosphate and beta-D-fructose 6-phosphate from D-ribose 5-phosphate and D-xylulose 5-phosphate (non-oxidative stage): step 2/3. Transaldolase is important for the balance of metabolites in the pentose-phosphate pathway. The chain is Transaldolase from Rhizobium rhizogenes (strain K84 / ATCC BAA-868) (Agrobacterium radiobacter).